An 87-amino-acid chain; its full sequence is Large ribosomal subunit protein eL31 (87 aa).

The protein belongs to the eukaryotic ribosomal protein eL31 family.

The chain is Large ribosomal subunit protein eL31 (rpl31e) from Methanocaldococcus jannaschii (strain ATCC 43067 / DSM 2661 / JAL-1 / JCM 10045 / NBRC 100440) (Methanococcus jannaschii).